The following is a 122-amino-acid chain: Large ribosomal subunit protein uL14 (122 aa).

It belongs to the universal ribosomal protein uL14 family. As to quaternary structure, part of the 50S ribosomal subunit. Forms a cluster with proteins L3 and L19. In the 70S ribosome, L14 and L19 interact and together make contacts with the 16S rRNA in bridges B5 and B8.

In terms of biological role, binds to 23S rRNA. Forms part of two intersubunit bridges in the 70S ribosome. This chain is Large ribosomal subunit protein uL14, found in Exiguobacterium sp. (strain ATCC BAA-1283 / AT1b).